A 141-amino-acid chain; its full sequence is Large ribosomal subunit protein bL21 (141 aa).

Positions 111-141 are disordered; the sequence is ATAPSRTEAAPESNPEAAPSAAATGIPADEE. A compositionally biased stretch (low complexity) spans 118 to 133; that stretch reads EAAPESNPEAAPSAAA.

Belongs to the bacterial ribosomal protein bL21 family. As to quaternary structure, part of the 50S ribosomal subunit. Contacts protein L20.

This protein binds to 23S rRNA in the presence of protein L20. This Synechococcus sp. (strain JA-2-3B'a(2-13)) (Cyanobacteria bacterium Yellowstone B-Prime) protein is Large ribosomal subunit protein bL21.